The primary structure comprises 171 residues: Dual specificity protein phosphatase OPG106 (171 aa).

Belongs to the protein-tyrosine phosphatase family. Non-receptor class dual specificity subfamily. Homodimer.

It is found in the virion. Its subcellular location is the host cytoplasm. It catalyses the reaction O-phospho-L-tyrosyl-[protein] + H2O = L-tyrosyl-[protein] + phosphate. It carries out the reaction O-phospho-L-seryl-[protein] + H2O = L-seryl-[protein] + phosphate. Functionally, serine/tyrosine phosphatase which down-regulates cellular antiviral response by dephosphorylating activated host STAT1 and blocking interferon (IFN)-stimulated innate immune responses. Dephosphorylates the OPG144 protein. The polypeptide is Dual specificity protein phosphatase OPG106 (OPG106) (Monkeypox virus).